A 509-amino-acid chain; its full sequence is ATP synthase subunit alpha (509 aa).

169-176 (GDRKTGKT) is a binding site for ATP.

Belongs to the ATPase alpha/beta chains family. In terms of assembly, F-type ATPases have 2 components, CF(1) - the catalytic core - and CF(0) - the membrane proton channel. CF(1) has five subunits: alpha(3), beta(3), gamma(1), delta(1), epsilon(1). CF(0) has three main subunits: a(1), b(2) and c(9-12). The alpha and beta chains form an alternating ring which encloses part of the gamma chain. CF(1) is attached to CF(0) by a central stalk formed by the gamma and epsilon chains, while a peripheral stalk is formed by the delta and b chains.

The protein resides in the cell membrane. The catalysed reaction is ATP + H2O + 4 H(+)(in) = ADP + phosphate + 5 H(+)(out). Produces ATP from ADP in the presence of a proton gradient across the membrane. The alpha chain is a regulatory subunit. This Limosilactobacillus reuteri (strain DSM 20016) (Lactobacillus reuteri) protein is ATP synthase subunit alpha.